The chain runs to 242 residues: Vacuole localized DSC protein 1 (242 aa).

2 consecutive transmembrane segments (helical) span residues Pro-128–Phe-148 and Leu-152–Ser-172.

In terms of assembly, part of the vacuole-localized DSC E3 ligase complex composed of at least TUL1, DSC2, DSC3, UBX3, CDC48 and VLD1.

It localises to the vacuole membrane. Its function is as follows. Component of the vacuole-localized DSC E3 ubiquitin ligase complex involved in the targeting of the complex to the vacuole membrane via the AP3 pathway to ubiquinate vacuolar membrane proteins. Competes with GLD1 to determine the subcellular localizations of the DSC complex. This Saccharomyces cerevisiae (strain ATCC 204508 / S288c) (Baker's yeast) protein is Vacuole localized DSC protein 1.